A 142-amino-acid polypeptide reads, in one-letter code: Alpha-lactalbumin (142 aa).

The signal sequence occupies residues 1 to 19 (MRFFVPLFLVGILFPAILA). The region spanning 20-142 (KQFTKCELSQ…KLEQWLCEKL (123 aa)) is the C-type lysozyme domain. Intrachain disulfides connect Cys-25–Cys-139, Cys-47–Cys-130, Cys-80–Cys-96, and Cys-92–Cys-110. Residues Thr-57 and Gln-58 each coordinate Ca(2+). Asn-64 carries N-linked (GlcNAc...) asparagine glycosylation. Residue Glu-68 participates in Zn(2+) binding. The N-linked (GlcNAc...) asparagine; atypical; partial glycan is linked to Asn-90. Lys-98, Leu-100, Asp-101, Asp-102, Asp-103, Asp-106, and Asp-107 together coordinate Ca(2+). Glu-135 contributes to the Zn(2+) binding site.

It belongs to the glycosyl hydrolase 22 family. In terms of assembly, lactose synthase (LS) is a heterodimer of a catalytic component, beta1,4-galactosyltransferase (beta4Gal-T1) and a regulatory component, alpha-lactalbumin (LA). As to expression, mammary gland specific. Secreted in milk.

It localises to the secreted. Regulatory subunit of lactose synthase, changes the substrate specificity of galactosyltransferase in the mammary gland making glucose a good acceptor substrate for this enzyme. This enables LS to synthesize lactose, the major carbohydrate component of milk. In other tissues, galactosyltransferase transfers galactose onto the N-acetylglucosamine of the oligosaccharide chains in glycoproteins. The polypeptide is Alpha-lactalbumin (LALBA) (Homo sapiens (Human)).